Consider the following 136-residue polypeptide: Psoriasis susceptibility 1 candidate gene 2 protein (136 aa).

Positions 1–22 (MILNWKLLGILVLCLHTRGISG) are cleaved as a signal peptide. The interval 20–136 (ISGSEGHPSH…DLDPPREEYR (117 aa)) is disordered. Composition is skewed to pro residues over residues 44–69 (PQGPPVPGDPWPGAPPLFEDPPPTRP) and 84–116 (PEPPRTDPPQPPRPDDPWPAGPQPPENPWPPAP). Positions 118 to 136 (VDNRPQEEPDLDPPREEYR) are enriched in basic and acidic residues.

In terms of tissue distribution, expressed in skin. Also expressed in heart and skeletal muscle.

The protein localises to the secreted. The chain is Psoriasis susceptibility 1 candidate gene 2 protein (PSORS1C2) from Homo sapiens (Human).